The following is a 246-amino-acid chain: MKYDIIGDIHGCFQEFQNLTEKLGYNWSSGLPVHPDQRKLAFVGDITDRGPHSLRMIEIVWELVIHKKEAYYAPGNHCNKLYRFFLGRNVTVAHGLETTVAEYEALPSHKQNIIKEKFITLYEQSPLYHILDEKRVIVCHAGIRQDYIGRRDKKVQTFVLYGDITGEKHADGSPVRRDWAQEYKGQAWIVYGHTPVAEPRFINQTVNIDTGAVFGGKLTGLRYPEMETISVPSSLPFVAEKFRPIS.

The protein belongs to the PrpE family. Ni(2+) is required as a cofactor.

The enzyme catalyses P(1),P(4)-bis(5'-guanosyl) tetraphosphate + H2O = GMP + GTP + 2 H(+). In terms of biological role, asymmetrically hydrolyzes Ap4p to yield AMP and ATP. This is Bis(5'-nucleosyl)-tetraphosphatase PrpE [asymmetrical] from Bacillus cereus (strain B4264).